Consider the following 338-residue polypeptide: DNA-directed RNA polymerase subunit alpha (338 aa).

The interval 1-225 is alpha N-terminal domain (alpha-NTD); the sequence is MLISQRPTLT…ELFGLARELN (225 aa). The interval 242–338 is alpha C-terminal domain (alpha-CTD); that stretch reads YIAAYSMPIE…YIDVEPEDAE (97 aa). Positions 314-338 are disordered; the sequence is FDPSTLEGYDAETGGYIDVEPEDAE.

Belongs to the RNA polymerase alpha chain family. In terms of assembly, homodimer. The RNAP catalytic core consists of 2 alpha, 1 beta, 1 beta' and 1 omega subunit. When a sigma factor is associated with the core the holoenzyme is formed, which can initiate transcription.

It carries out the reaction RNA(n) + a ribonucleoside 5'-triphosphate = RNA(n+1) + diphosphate. In terms of biological role, DNA-dependent RNA polymerase catalyzes the transcription of DNA into RNA using the four ribonucleoside triphosphates as substrates. This is DNA-directed RNA polymerase subunit alpha from Corynebacterium efficiens (strain DSM 44549 / YS-314 / AJ 12310 / JCM 11189 / NBRC 100395).